The sequence spans 243 residues: Geranylgeranylglyceryl phosphate synthase (243 aa).

Residues aspartate 29 and serine 58 each coordinate Mg(2+). Residues 178–184 (YLEAGSG), 209–210 (GG), and 231–232 (GT) contribute to the sn-glycerol 1-phosphate site.

It belongs to the GGGP/HepGP synthase family. Group II subfamily. In terms of assembly, homodimer. Mg(2+) serves as cofactor.

It carries out the reaction sn-glycerol 1-phosphate + (2E,6E,10E)-geranylgeranyl diphosphate = sn-3-O-(geranylgeranyl)glycerol 1-phosphate + diphosphate. Functionally, prenyltransferase that catalyzes the transfer of the geranylgeranyl moiety of geranylgeranyl diphosphate (GGPP) to the C3 hydroxyl of sn-glycerol-1-phosphate (G1P). In Flavobacterium johnsoniae (strain ATCC 17061 / DSM 2064 / JCM 8514 / BCRC 14874 / CCUG 350202 / NBRC 14942 / NCIMB 11054 / UW101) (Cytophaga johnsonae), this protein is Geranylgeranylglyceryl phosphate synthase.